Consider the following 139-residue polypeptide: D-ribose pyranase (139 aa).

The active-site Proton donor is His20. Substrate contacts are provided by residues Asp28, His106, and Tyr128–Asn130.

This sequence belongs to the RbsD / FucU family. RbsD subfamily. Homodecamer.

It is found in the cytoplasm. The enzyme catalyses beta-D-ribopyranose = beta-D-ribofuranose. It functions in the pathway carbohydrate metabolism; D-ribose degradation; D-ribose 5-phosphate from beta-D-ribopyranose: step 1/2. In terms of biological role, catalyzes the interconversion of beta-pyran and beta-furan forms of D-ribose. This Aliivibrio fischeri (strain ATCC 700601 / ES114) (Vibrio fischeri) protein is D-ribose pyranase.